Reading from the N-terminus, the 517-residue chain is L-amino-acid oxidase (517 aa).

The first 18 residues, 1–18 (MNVFFMFSLLFLAALGSC), serve as a signal peptide directing secretion. A disulfide bond links Cys-29 and Cys-192. Residues 62-63 (MA), 82-83 (EA), Arg-90, and 106-109 (GPMR) each bind FAD. Residue Arg-109 coordinates substrate. Asn-191 is a glycosylation site (N-linked (GlcNAc...) asparagine). Val-280 contacts FAD. A disulfide bond links Cys-350 and Cys-431. A substrate-binding site is contributed by Tyr-391. Residues Glu-476 and 483 to 488 (GWLDST) each bind FAD. Substrate is bound at residue 483 to 484 (GW).

It belongs to the flavin monoamine oxidase family. FIG1 subfamily. As to quaternary structure, homodimer; non-covalently linked. It depends on FAD as a cofactor. Post-translationally, N-glycosylated. As to expression, expressed by the venom gland.

It localises to the secreted. The catalysed reaction is an L-alpha-amino acid + O2 + H2O = a 2-oxocarboxylate + H2O2 + NH4(+). In terms of biological role, catalyzes an oxidative deamination of predominantly hydrophobic and aromatic L-amino acids, thus producing hydrogen peroxide that may contribute to the diverse toxic effects of this enzyme. Exhibits diverse biological activities, such as hemorrhage, hemolysis, edema, apoptosis of vascular endothelial cells or tumor cell lines, antiparasitic activities, as well as regulation of platelet aggregation. Effects of snake L-amino oxidases on platelets are controversial, since they either induce aggregation or inhibit agonist-induced aggregation. These different effects are probably due to different experimental conditions. This protein has antibacterial activities. This is L-amino-acid oxidase from Pseudechis australis (Mulga snake).